The following is a 516-amino-acid chain: MTDIHNHKILILDFGSQYTQLIARRVREVDVFCEIFPHDVAADFIKNYQAKGIILSGGPESVYDSDVKAPEIVFELGVPVLGICYGMQTMVMQHGGEVKGADQSEFGKAIINILNSTNNIFSNMEHEQLVWMSHSDKVTQTGEHFEIIASSTNAPVAAVAHKNKPFFGVQFHPETTHTENGKQIIENFVVNICGCDTLWNIENIIENDIKEIKQKVGTDKVILGLSGGVDSSVVAAILHQAIGDQLTCIFVDTGLLRLNEDDQVMQVFAEHMDINVIRINAKNRFLDALRGICDPEQKRKIIGKLFVDIFDEEAAKIENAKWLAQGTIYSDVIESAGNNQSKAHVIKSHHNVGGLPKEMKLKLLEPLRELFKDEVRKLGLGLGLPYNMLYRHPFPGPGLGVRILGEIKKEYVETLQKADAIFTEELYKHNLYHDVSQAFGVFLPVKSVGVVGDQRRYEYVIALRAVVSIDFMTATWANLPYDFLSLVSNRIVNEVKQVSRVVYDVTGKPPGTIEWE.

Positions 8-198 constitute a Glutamine amidotransferase type-1 domain; sequence KILILDFGSQ…VVNICGCDTL (191 aa). The active-site Nucleophile is the Cys84. Catalysis depends on residues His172 and Glu174. The region spanning 199 to 391 is the GMPS ATP-PPase domain; that stretch reads WNIENIIEND…LGLPYNMLYR (193 aa). 226 to 232 provides a ligand contact to ATP; the sequence is SGGVDSS.

In terms of assembly, homodimer.

It catalyses the reaction XMP + L-glutamine + ATP + H2O = GMP + L-glutamate + AMP + diphosphate + 2 H(+). It participates in purine metabolism; GMP biosynthesis; GMP from XMP (L-Gln route): step 1/1. In terms of biological role, catalyzes the synthesis of GMP from XMP. This chain is GMP synthase [glutamine-hydrolyzing], found in Francisella tularensis subsp. mediasiatica (strain FSC147).